The chain runs to 427 residues: UDP-N-acetylglucosamine 1-carboxyvinyltransferase (427 aa).

A phosphoenolpyruvate-binding site is contributed by lysine 22–asparagine 23. Position 99 (arginine 99) interacts with UDP-N-acetyl-alpha-D-glucosamine. Residue cysteine 123 is the Proton donor of the active site. Cysteine 123 is modified (2-(S-cysteinyl)pyruvic acid O-phosphothioketal). Residues arginine 128 to leucine 132, aspartate 313, and isoleucine 335 contribute to the UDP-N-acetyl-alpha-D-glucosamine site.

The protein belongs to the EPSP synthase family. MurA subfamily.

It localises to the cytoplasm. The enzyme catalyses phosphoenolpyruvate + UDP-N-acetyl-alpha-D-glucosamine = UDP-N-acetyl-3-O-(1-carboxyvinyl)-alpha-D-glucosamine + phosphate. Its pathway is cell wall biogenesis; peptidoglycan biosynthesis. Cell wall formation. Adds enolpyruvyl to UDP-N-acetylglucosamine. In Sphingopyxis alaskensis (strain DSM 13593 / LMG 18877 / RB2256) (Sphingomonas alaskensis), this protein is UDP-N-acetylglucosamine 1-carboxyvinyltransferase.